Here is a 448-residue protein sequence, read N- to C-terminus: B-cell lymphoma 3 protein homolog (448 aa).

Positions 1–54 are disordered; it reads MPRCPAGAMDEGPVDLRTRPKGTPGAALPLRKRPLRPASPEPATTRSPAGPLDA. Serine 39 carries the phosphoserine modification. 7 ANK repeats span residues 129–161, 166–195, 199–228, 236–265, 270–299, 303–332, and 333–362; these read DGDT…REVD, LRQT…SPMA, HGQT…SGSV, EGLT…DIDA, SGRS…NVNA, SGSS…DSGL, and KNCH…RAAS. The segment at 356 to 448 is disordered; that stretch reads KASRAASGSQ…VPPSPAPGSS (93 aa). The span at 361 to 376 shows a compositional bias: polar residues; that stretch reads ASGSQPEPSPDQSATN. Serine 369 is modified (phosphoserine). The segment covering 377 to 398 has biased composition (low complexity); that stretch reads SPESSSRLSSNGLQSSPSSSPS. Phosphoserine; by GSK3 occurs at positions 396 and 400. Polar residues predominate over residues 411 to 423; it reads TPQNFFLPTTSTP. The span at 425-436 shows a compositional bias: low complexity; the sequence is FLPFPGVLRGPG. Positions 437–448 are enriched in pro residues; sequence RPVPPSPAPGSS.

In terms of assembly, component of a complex consisting of the NF-kappa-B p52-p52 homodimer and BCL3. Component of a complex consisting of the NF-kappa-B p50-p50 homodimer and BCL3. Interacts with N4BP2, COPS5 and PIR. Interacts with CYLD. In terms of processing, polyubiquitinated. Ubiquitination via 'Lys-63'-linked ubiquitin chains is required for nuclear accumulation. Deubiquitinated by CYLD, which acts on 'Lys-63'-linked ubiquitin chains. Deubiquitination by CYLD prevents nuclear accumulation. Post-translationally, activated by phosphorylation.

It localises to the nucleus. The protein localises to the cytoplasm. It is found in the perinuclear region. Its function is as follows. Contributes to the regulation of transcriptional activation of NF-kappa-B target genes. In the cytoplasm, inhibits the nuclear translocation of the NF-kappa-B p50 subunit. In the nucleus, acts as a transcriptional activator that promotes transcription of NF-kappa-B target genes. Contributes to the regulation of cell proliferation. This is B-cell lymphoma 3 protein homolog (Bcl3) from Mus musculus (Mouse).